A 126-amino-acid chain; its full sequence is Aspartate 1-decarboxylase (126 aa).

The Schiff-base intermediate with substrate; via pyruvic acid role is filled by S25. The residue at position 25 (S25) is a Pyruvic acid (Ser). T57 provides a ligand contact to substrate. Y58 (proton donor) is an active-site residue. G73–A75 provides a ligand contact to substrate.

This sequence belongs to the PanD family. As to quaternary structure, heterooctamer of four alpha and four beta subunits. Pyruvate serves as cofactor. Post-translationally, is synthesized initially as an inactive proenzyme, which is activated by self-cleavage at a specific serine bond to produce a beta-subunit with a hydroxyl group at its C-terminus and an alpha-subunit with a pyruvoyl group at its N-terminus.

The protein resides in the cytoplasm. The catalysed reaction is L-aspartate + H(+) = beta-alanine + CO2. It functions in the pathway cofactor biosynthesis; (R)-pantothenate biosynthesis; beta-alanine from L-aspartate: step 1/1. Its function is as follows. Catalyzes the pyruvoyl-dependent decarboxylation of aspartate to produce beta-alanine. The sequence is that of Aspartate 1-decarboxylase from Xylella fastidiosa (strain M12).